Here is a 563-residue protein sequence, read N- to C-terminus: Urocanate hydratase (563 aa).

Residues 53 to 54, Q131, 177 to 179, E197, R202, 243 to 244, 264 to 268, 274 to 275, and Y323 each bind NAD(+); these read GG, GMG, NA, QTSAH, and YL. C411 is a catalytic residue. An NAD(+)-binding site is contributed by G493.

Belongs to the urocanase family. NAD(+) is required as a cofactor.

It is found in the cytoplasm. The catalysed reaction is 4-imidazolone-5-propanoate = trans-urocanate + H2O. The protein operates within amino-acid degradation; L-histidine degradation into L-glutamate; N-formimidoyl-L-glutamate from L-histidine: step 2/3. In terms of biological role, catalyzes the conversion of urocanate to 4-imidazolone-5-propionate. The sequence is that of Urocanate hydratase from Yersinia enterocolitica serotype O:8 / biotype 1B (strain NCTC 13174 / 8081).